The primary structure comprises 252 residues: Imidazole glycerol phosphate synthase subunit HisF (252 aa).

Active-site residues include D11 and D130.

This sequence belongs to the HisA/HisF family. In terms of assembly, heterodimer of HisH and HisF.

The protein localises to the cytoplasm. The catalysed reaction is 5-[(5-phospho-1-deoxy-D-ribulos-1-ylimino)methylamino]-1-(5-phospho-beta-D-ribosyl)imidazole-4-carboxamide + L-glutamine = D-erythro-1-(imidazol-4-yl)glycerol 3-phosphate + 5-amino-1-(5-phospho-beta-D-ribosyl)imidazole-4-carboxamide + L-glutamate + H(+). Its pathway is amino-acid biosynthesis; L-histidine biosynthesis; L-histidine from 5-phospho-alpha-D-ribose 1-diphosphate: step 5/9. In terms of biological role, IGPS catalyzes the conversion of PRFAR and glutamine to IGP, AICAR and glutamate. The HisF subunit catalyzes the cyclization activity that produces IGP and AICAR from PRFAR using the ammonia provided by the HisH subunit. The polypeptide is Imidazole glycerol phosphate synthase subunit HisF (Anoxybacillus flavithermus (strain DSM 21510 / WK1)).